The following is a 282-amino-acid chain: Undecaprenyl-diphosphatase (282 aa).

The next 8 helical transmembrane spans lie at 2-22 (FDFI…FLPV), 47-67 (FTAV…IQLY), 90-110 (WIKV…LNNF), 115-135 (LLNP…FIVI), 152-172 (ITFK…VPGT), 190-210 (FVAA…VTIL), 225-245 (AQLF…LFAI), and 259-279 (IFGW…IAGL).

This sequence belongs to the UppP family.

It is found in the cell membrane. It catalyses the reaction di-trans,octa-cis-undecaprenyl diphosphate + H2O = di-trans,octa-cis-undecaprenyl phosphate + phosphate + H(+). Catalyzes the dephosphorylation of undecaprenyl diphosphate (UPP). Confers resistance to bacitracin. In Leuconostoc citreum (strain KM20), this protein is Undecaprenyl-diphosphatase.